The following is a 733-amino-acid chain: 2'-5'-oligoadenylate synthase 2 (733 aa).

Residue Gly2 is the site of N-myristoyl glycine attachment. 2 OAS domain regions span residues 47 to 365 and 373 to 713; these read VPSQ…CWDV and TPSH…WKVP. Lys408 carries the post-translational modification N6-acetyllysine. ATP is bound at residue Ser427. Residues Asp439, Asp441, and Asp510 each contribute to the Mg(2+) site. ATP-binding residues include Arg574 and Lys577.

It belongs to the 2-5A synthase family. As to quaternary structure, homodimer. Requires Mg(2+) as cofactor. Post-translationally, myristoylation is not essential for its activity. In terms of processing, glycosylated. Glycosylation is essential for its activity.

Its subcellular location is the cytoplasm. The protein resides in the perinuclear region. The catalysed reaction is 3 ATP = 5'-triphosphoadenylyl-(2'-&gt;5')-adenylyl-(2'-&gt;5')-adenosine + 2 diphosphate. Produced as a latent enzyme which is activated by double stranded RNA (dsRNA) generated during the course of viral infection. The dsRNA activator must be at least 15 nucleotides long, and no modification of the 2'-hydroxyl group is tolerated. ssRNA or dsDNA do not act as activators. Strongly inhibited by copper, iron and zinc ions. Partially inhibited by cobalt and nickel ions. In terms of biological role, interferon-induced, dsRNA-activated antiviral enzyme which plays a critical role in cellular innate antiviral response. Activated by detection of double stranded RNA (dsRNA): polymerizes higher oligomers of 2'-5'-oligoadenylates (2-5A) from ATP which then bind to the inactive monomeric form of ribonuclease L (RNASEL) leading to its dimerization and subsequent activation. Activation of RNASEL leads to degradation of cellular as well as viral RNA, resulting in the inhibition of protein synthesis, thus terminating viral replication. Can mediate the antiviral effect via the classical RNASEL-dependent pathway or an alternative antiviral pathway independent of RNASEL. In addition, it may also play a role in other cellular processes such as apoptosis, cell growth, differentiation and gene regulation. May act as a negative regulator of lactation, stopping lactation in virally infected mammary gland lobules, thereby preventing transmission of viruses to neonates. Non-infected lobules would not be affected, allowing efficient pup feeding during infection. The sequence is that of 2'-5'-oligoadenylate synthase 2 (Oas2) from Rattus norvegicus (Rat).